We begin with the raw amino-acid sequence, 931 residues long: Protein phosphatase 1 regulatory subunit 37 homolog (931 aa).

The segment at Thr-20 to Ala-71 is disordered. Over residues Pro-41 to Ser-51 the composition is skewed to polar residues. LRR repeat units lie at residues Ala-232–Ala-259, Ser-262–Cys-285, Asn-290–Leu-314, Leu-323–Arg-346, Lys-351–Glu-374, Asn-379–Asn-407, His-409–Glu-430, and Asn-435–Ser-458. Residues Gln-519–Ala-533 are compositionally biased toward basic and acidic residues. Disordered stretches follow at residues Gln-519–Arg-602 and Pro-780–Arg-807. The segment covering Asp-534–Thr-547 has biased composition (acidic residues). Positions Ser-554–Ser-563 are enriched in low complexity. Basic and acidic residues-rich tracts occupy residues Pro-564 to Pro-584 and Thr-790 to Arg-807.

The protein belongs to the PPP1R37 family.

The chain is Protein phosphatase 1 regulatory subunit 37 homolog from Caenorhabditis briggsae.